A 522-amino-acid chain; its full sequence is Pectinesterase/pectinesterase inhibitor PPE8B (522 aa).

An N-terminal signal peptide occupies residues 1–30; the sequence is MPYLLMASHNPLPAGKQLLLLVLLCAFFSS. A pectinesterase inhibitor PPE8B region spans residues 31 to 174; sequence SFIPFASCSI…TSLVQELLTQ (144 aa). 6 N-linked (GlcNAc...) asparagine glycosylation sites follow: Asn-105, Asn-118, Asn-119, Asn-218, Asn-221, and Asn-274. Positions 208 to 506 are pectinesterase PPE8B; it reads DAIVAQDGTG…YTVAQFIEGN (299 aa). Substrate contacts are provided by Thr-283 and Gln-313. The active-site Proton donor; for pectinesterase activity is the Asp-336. Cys-350 and Cys-370 are joined by a disulfide. The Nucleophile; for pectinesterase activity role is filled by Asp-357. Asn-405 carries an N-linked (GlcNAc...) asparagine glycan. Substrate contacts are provided by Arg-426 and Trp-428. 2 N-linked (GlcNAc...) asparagine glycosylation sites follow: Asn-489 and Asn-496.

It in the N-terminal section; belongs to the PMEI family. In the C-terminal section; belongs to the pectinesterase family.

The protein resides in the secreted. The protein localises to the cell wall. The enzyme catalyses [(1-&gt;4)-alpha-D-galacturonosyl methyl ester](n) + n H2O = [(1-&gt;4)-alpha-D-galacturonosyl](n) + n methanol + n H(+). It functions in the pathway glycan metabolism; pectin degradation; 2-dehydro-3-deoxy-D-gluconate from pectin: step 1/5. Functionally, may have roles in the deposition of pectin in developing tissues and in the wall loosening and cell separation that occurs in cell expansion, fruit ripening and abscission. This Prunus persica (Peach) protein is Pectinesterase/pectinesterase inhibitor PPE8B.